Reading from the N-terminus, the 592-residue chain is Methylenetetrahydrofolate reductase (NADH) 1 (592 aa).

The Proton donor/acceptor role is filled by glutamate 21. Residues 21–26 (EFFPPK) and 52–53 (TW) each bind NAD(+). FAD-binding positions include 52–53 (TW), histidine 81, 111–113 (RGD), tyrosine 153, 157–160 (HPDV), aspartate 175, and lysine 182. Residue aspartate 113 coordinates substrate. Substrate-binding residues include glutamine 193 and tyrosine 285.

This sequence belongs to the methylenetetrahydrofolate reductase family. In terms of assembly, homodimer. FAD serves as cofactor.

The enzyme catalyses (6S)-5-methyl-5,6,7,8-tetrahydrofolate + NAD(+) = (6R)-5,10-methylene-5,6,7,8-tetrahydrofolate + NADH + H(+). It participates in one-carbon metabolism; tetrahydrofolate interconversion. Plant MTHFRs strongly prefer NADH over NADPH. Not inhibited by methionine or S-adenosylmethionine. Functionally, the probable reversibility of the MTHFR reaction in plants suggests that they can metabolize the methyl group of 5,10-methylenetetrahydrofolate to serine, sugars and starch. This Arabidopsis thaliana (Mouse-ear cress) protein is Methylenetetrahydrofolate reductase (NADH) 1 (MTHFR1).